The sequence spans 272 residues: Testis-specific gene 13 protein (272 aa).

The sequence is that of Testis-specific gene 13 protein (TSGA13) from Bos taurus (Bovine).